The chain runs to 295 residues: tRNA pseudouridine synthase B (295 aa).

Catalysis depends on Asp-42, which acts as the Nucleophile.

Belongs to the pseudouridine synthase TruB family. Type 1 subfamily.

The catalysed reaction is uridine(55) in tRNA = pseudouridine(55) in tRNA. Its function is as follows. Responsible for synthesis of pseudouridine from uracil-55 in the psi GC loop of transfer RNAs. In Cutibacterium acnes (strain DSM 16379 / KPA171202) (Propionibacterium acnes), this protein is tRNA pseudouridine synthase B.